We begin with the raw amino-acid sequence, 868 residues long: LPS-assembly protein LptD (868 aa).

An N-terminal signal peptide occupies residues 1–24 (MLKGIHKYLLMCFGTVLFTVQANA).

The protein belongs to the LptD family. In terms of assembly, component of the lipopolysaccharide transport and assembly complex. Interacts with LptE and LptA.

Its subcellular location is the cell outer membrane. In terms of biological role, together with LptE, is involved in the assembly of lipopolysaccharide (LPS) at the surface of the outer membrane. The polypeptide is LPS-assembly protein LptD (Francisella tularensis subsp. novicida (strain U112)).